The primary structure comprises 315 residues: Homoserine kinase (315 aa).

97-107 (PPARGLGSSAT) contacts ATP.

The protein belongs to the GHMP kinase family. Homoserine kinase subfamily.

The protein resides in the cytoplasm. The enzyme catalyses L-homoserine + ATP = O-phospho-L-homoserine + ADP + H(+). Its pathway is amino-acid biosynthesis; L-threonine biosynthesis; L-threonine from L-aspartate: step 4/5. In terms of biological role, catalyzes the ATP-dependent phosphorylation of L-homoserine to L-homoserine phosphate. This Synechococcus sp. (strain CC9902) protein is Homoserine kinase.